The sequence spans 344 residues: Thioredoxin domain-containing protein 15 (344 aa).

The signal sequence occupies residues 1 to 20 (MQLLCWWQVLLWVLGLPAHG). Topologically, residues 21–305 (LEVAEDSGHP…GPLPSTLIKT (285 aa)) are extracellular. Disordered stretches follow at residues 55–119 (DHRD…FGLQ) and 136–156 (GVTEAEPVATEDANSTDSLKS). Residues 88–97 (EDQRSPEAHD) are compositionally biased toward basic and acidic residues. The Thioredoxin domain maps to 163 to 280 (ERNVTGLENF…LKIFIFNQTG (118 aa)). N-linked (GlcNAc...) asparagine glycosylation is found at N171, N178, N190, and N277. A helical transmembrane segment spans residues 306–326 (VDWLLVFSLFFLISFIMYATI). At 327–344 (RTESIRWLIPGQEQEHAE) the chain is on the cytoplasmic side.

The protein resides in the cell projection. It is found in the cilium membrane. Functionally, acts as a positive regulator of ciliary hedgehog signaling. Required for cilia biogenesis. The protein is Thioredoxin domain-containing protein 15 (Txndc15) of Mus musculus (Mouse).